The primary structure comprises 157 residues: S-ribosylhomocysteine lyase (157 aa).

H53, H57, and C124 together coordinate Fe cation.

The protein belongs to the LuxS family. Homodimer. It depends on Fe cation as a cofactor.

It carries out the reaction S-(5-deoxy-D-ribos-5-yl)-L-homocysteine = (S)-4,5-dihydroxypentane-2,3-dione + L-homocysteine. Involved in the synthesis of autoinducer 2 (AI-2) which is secreted by bacteria and is used to communicate both the cell density and the metabolic potential of the environment. The regulation of gene expression in response to changes in cell density is called quorum sensing. Catalyzes the transformation of S-ribosylhomocysteine (RHC) to homocysteine (HC) and 4,5-dihydroxy-2,3-pentadione (DPD). The sequence is that of S-ribosylhomocysteine lyase from Borreliella afzelii (strain PKo) (Borrelia afzelii).